Here is a 431-residue protein sequence, read N- to C-terminus: Histidine--tRNA ligase (431 aa).

The disordered stretch occupies residues 1-20 (MALQRPKGTQDHLPDGSPKL).

Belongs to the class-II aminoacyl-tRNA synthetase family. Homodimer.

Its subcellular location is the cytoplasm. The catalysed reaction is tRNA(His) + L-histidine + ATP = L-histidyl-tRNA(His) + AMP + diphosphate + H(+). In Deinococcus geothermalis (strain DSM 11300 / CIP 105573 / AG-3a), this protein is Histidine--tRNA ligase.